We begin with the raw amino-acid sequence, 91 residues long: Small integral membrane protein 12-B (91 aa).

Residues 12–34 (YAPYITFPVAFVVGAVGYQLEWF) traverse the membrane as a helical segment.

This sequence belongs to the SMIM12 family.

It is found in the membrane. The polypeptide is Small integral membrane protein 12-B (smim12-b) (Xenopus laevis (African clawed frog)).